The sequence spans 290 residues: MYG1 protein CPn_0489/CP_0265/CPj0489/CpB0509 (290 aa).

Belongs to the MYG1 family.

The chain is MYG1 protein CPn_0489/CP_0265/CPj0489/CpB0509 from Chlamydia pneumoniae (Chlamydophila pneumoniae).